Consider the following 492-residue polypeptide: 6-phosphogluconate dehydrogenase, decarboxylating (492 aa).

NADP(+) contacts are provided by residues 13–18, 36–38, 78–80, and Asn-106; these read GLAVMG, NRT, and VKA. Asn-106 is a substrate binding site. Phosphoserine is present on Ser-107. Substrate is bound at residue 132–134; sequence SGG. The active-site Proton acceptor is Lys-187. Residue 190-191 coordinates substrate; the sequence is HN. Glu-194 acts as the Proton donor in catalysis. Tyr-195 provides a ligand contact to substrate. Residue Ser-215 is modified to Phosphoserine. Substrate contacts are provided by Lys-264, Arg-291, Arg-449, and His-455.

Belongs to the 6-phosphogluconate dehydrogenase family. In terms of assembly, homodimer.

It catalyses the reaction 6-phospho-D-gluconate + NADP(+) = D-ribulose 5-phosphate + CO2 + NADPH. The protein operates within carbohydrate degradation; pentose phosphate pathway; D-ribulose 5-phosphate from D-glucose 6-phosphate (oxidative stage): step 3/3. Functionally, catalyzes the oxidative decarboxylation of 6-phosphogluconate to ribulose 5-phosphate and CO(2), with concomitant reduction of NADP to NADPH. The chain is 6-phosphogluconate dehydrogenase, decarboxylating from Schizosaccharomyces pombe (strain 972 / ATCC 24843) (Fission yeast).